A 256-amino-acid chain; its full sequence is Imidazole glycerol phosphate synthase subunit HisF (256 aa).

Catalysis depends on residues D12 and D131.

This sequence belongs to the HisA/HisF family. Heterodimer of HisH and HisF.

The protein localises to the cytoplasm. The catalysed reaction is 5-[(5-phospho-1-deoxy-D-ribulos-1-ylimino)methylamino]-1-(5-phospho-beta-D-ribosyl)imidazole-4-carboxamide + L-glutamine = D-erythro-1-(imidazol-4-yl)glycerol 3-phosphate + 5-amino-1-(5-phospho-beta-D-ribosyl)imidazole-4-carboxamide + L-glutamate + H(+). Its pathway is amino-acid biosynthesis; L-histidine biosynthesis; L-histidine from 5-phospho-alpha-D-ribose 1-diphosphate: step 5/9. Its function is as follows. IGPS catalyzes the conversion of PRFAR and glutamine to IGP, AICAR and glutamate. The HisF subunit catalyzes the cyclization activity that produces IGP and AICAR from PRFAR using the ammonia provided by the HisH subunit. In Pseudomonas fluorescens (strain ATCC BAA-477 / NRRL B-23932 / Pf-5), this protein is Imidazole glycerol phosphate synthase subunit HisF.